The sequence spans 108 residues: Urease subunit gamma (108 aa).

This sequence belongs to the urease gamma subunit family. In terms of assembly, heterotrimer of UreA (gamma), UreB (beta) and UreC (alpha) subunits. Three heterotrimers associate to form the active enzyme.

The protein localises to the cytoplasm. It catalyses the reaction urea + 2 H2O + H(+) = hydrogencarbonate + 2 NH4(+). It functions in the pathway nitrogen metabolism; urea degradation; CO(2) and NH(3) from urea (urease route): step 1/1. The chain is Urease subunit gamma from Trichodesmium erythraeum (strain IMS101).